A 100-amino-acid chain; its full sequence is Urease subunit gamma (100 aa).

The protein belongs to the urease gamma subunit family. As to quaternary structure, heterotrimer of UreA (gamma), UreB (beta) and UreC (alpha) subunits. Three heterotrimers associate to form the active enzyme.

Its subcellular location is the cytoplasm. It carries out the reaction urea + 2 H2O + H(+) = hydrogencarbonate + 2 NH4(+). The protein operates within nitrogen metabolism; urea degradation; CO(2) and NH(3) from urea (urease route): step 1/1. The sequence is that of Urease subunit gamma from Paenarthrobacter aurescens (strain TC1).